A 303-amino-acid chain; its full sequence is Glycine--tRNA ligase alpha subunit (303 aa).

It belongs to the class-II aminoacyl-tRNA synthetase family. As to quaternary structure, tetramer of two alpha and two beta subunits.

Its subcellular location is the cytoplasm. The catalysed reaction is tRNA(Gly) + glycine + ATP = glycyl-tRNA(Gly) + AMP + diphosphate. The protein is Glycine--tRNA ligase alpha subunit of Streptococcus equi subsp. zooepidemicus (strain H70).